Consider the following 538-residue polypeptide: [Pyruvate dehydrogenase [acetyl-transferring]]-phosphatase 1, mitochondrial (538 aa).

The transit peptide at 1–71 (MPAPTQLFFP…WWQYTQGRRY (71 aa)) directs the protein to the mitochondrion. The region spanning 109–525 (VLGFDSNQLP…DDITIIVVQF (417 aa)) is the PPM-type phosphatase domain. Mn(2+) contacts are provided by aspartate 144 and glycine 145. At lysine 202 the chain carries N6-acetyllysine. Positions 418 and 516 each coordinate Mn(2+).

It belongs to the PP2C family. As to quaternary structure, heterodimer of a catalytic (PDP1) and a regulatory (PDPR) subunit. Requires Mn(2+) as cofactor. It depends on Mg(2+) as a cofactor.

The protein localises to the mitochondrion. The catalysed reaction is O-phospho-L-seryl-[pyruvate dehydrogenase E1 alpha subunit] + H2O = L-seryl-[pyruvate dehydrogenase E1 alpha subunit] + phosphate. Magnesium-dependent and calcium-stimulated. PDP1 activity strongly depends on its Ca(2+)-dependent binding to the lipoyl domain of E2 subunit of component of the pyruvate dehydrogenase complex. In terms of biological role, mitochondrial enzyme that catalyzes the dephosphorylation and concomitant reactivation of the alpha subunit of the E1 component of the pyruvate dehydrogenase complex (PDC), thereby stimulating the conversion of pyruvate into acetyl-CoA. This Bos taurus (Bovine) protein is [Pyruvate dehydrogenase [acetyl-transferring]]-phosphatase 1, mitochondrial (PDP1).